Here is a 494-residue protein sequence, read N- to C-terminus: NADH-ubiquinone oxidoreductase chain 4 (494 aa).

A run of 14 helical transmembrane segments spans residues 6 to 26 (IMIY…LLIY), 41 to 61 (TIGL…FILF), 87 to 107 (IDGI…ISLV), 118 to 138 (VLSF…VFLV), 141 to 161 (ILLF…LIGL), 172 to 192 (FYLF…IITM), 207 to 227 (ANFS…SFAV), 246 to 266 (PLAG…YGIF), 280 to 300 (YTYI…FSTL), 302 to 322 (TIAI…VYLL), 336 to 356 (IALG…VGGI), 375 to 395 (LMPI…GSPL), 415 to 435 (VLGV…IFMF), and 460 to 480 (FILL…PAVI).

The protein belongs to the complex I subunit 4 family.

It is found in the mitochondrion membrane. It carries out the reaction a ubiquinone + NADH + 5 H(+)(in) = a ubiquinol + NAD(+) + 4 H(+)(out). Functionally, core subunit of the mitochondrial membrane respiratory chain NADH dehydrogenase (Complex I) that is believed to belong to the minimal assembly required for catalysis. Complex I functions in the transfer of electrons from NADH to the respiratory chain. The immediate electron acceptor for the enzyme is believed to be ubiquinone. The polypeptide is NADH-ubiquinone oxidoreductase chain 4 (ND4) (Trichophyton rubrum (Athlete's foot fungus)).